The sequence spans 689 residues: Glycine--tRNA ligase beta subunit (689 aa).

It belongs to the class-II aminoacyl-tRNA synthetase family. As to quaternary structure, tetramer of two alpha and two beta subunits.

The protein localises to the cytoplasm. The catalysed reaction is tRNA(Gly) + glycine + ATP = glycyl-tRNA(Gly) + AMP + diphosphate. This is Glycine--tRNA ligase beta subunit from Escherichia coli O7:K1 (strain IAI39 / ExPEC).